A 160-amino-acid chain; its full sequence is SsrA-binding protein (160 aa).

A disordered region spans residues 131–160 (KKEYDKRHTERERDSDRELQRAVRTKGKED).

It belongs to the SmpB family.

It localises to the cytoplasm. Required for rescue of stalled ribosomes mediated by trans-translation. Binds to transfer-messenger RNA (tmRNA), required for stable association of tmRNA with ribosomes. tmRNA and SmpB together mimic tRNA shape, replacing the anticodon stem-loop with SmpB. tmRNA is encoded by the ssrA gene; the 2 termini fold to resemble tRNA(Ala) and it encodes a 'tag peptide', a short internal open reading frame. During trans-translation Ala-aminoacylated tmRNA acts like a tRNA, entering the A-site of stalled ribosomes, displacing the stalled mRNA. The ribosome then switches to translate the ORF on the tmRNA; the nascent peptide is terminated with the 'tag peptide' encoded by the tmRNA and targeted for degradation. The ribosome is freed to recommence translation, which seems to be the essential function of trans-translation. This chain is SsrA-binding protein, found in Pseudomonas fluorescens (strain ATCC BAA-477 / NRRL B-23932 / Pf-5).